The sequence spans 474 residues: Nuclear receptor ROR-alpha B (474 aa).

The segment at residues 14–89 is a DNA-binding region (nuclear receptor); that stretch reads SIPCKICGDK…VGMSRDAVKF (76 aa). NR C4-type zinc fingers lie at residues 17–37 and 53–72; these read CKICGDKSSGIHYGVITCEGC and CPRQKSCLIDRTSRNRCQHC. Residues 98–124 show a composition bias toward basic and acidic residues; it reads DSLFAEVQKHRQQQQDDKTGDESEKNQ. A disordered region spans residues 98–144; that stretch reads DSLFAEVQKHRQQQQDDKTGDESEKNQESQAPGEAEPLTPSYALSSS. The 239-residue stretch at 223–461 folds into the NR LBD domain; it reads DLEHLSENIC…TRFPPLYKEL (239 aa). An AF-2 region spans residues 450–461; the sequence is VHTRFPPLYKEL.

The protein belongs to the nuclear hormone receptor family.

The protein resides in the nucleus. Nuclear receptor that binds DNA as a monomer to ROR response elements (RORE). Required for proper cerebellum development. In Danio rerio (Zebrafish), this protein is Nuclear receptor ROR-alpha B (rorab).